The sequence spans 319 residues: Acetyl-coenzyme A carboxylase carboxyl transferase subunit alpha (319 aa).

The CoA carboxyltransferase C-terminal domain occupies 35-296 (NIDEEVHRLR…KAQLLEDLAD (262 aa)).

This sequence belongs to the AccA family. Acetyl-CoA carboxylase is a heterohexamer composed of biotin carboxyl carrier protein (AccB), biotin carboxylase (AccC) and two subunits each of ACCase subunit alpha (AccA) and ACCase subunit beta (AccD).

The protein localises to the cytoplasm. It catalyses the reaction N(6)-carboxybiotinyl-L-lysyl-[protein] + acetyl-CoA = N(6)-biotinyl-L-lysyl-[protein] + malonyl-CoA. Its pathway is lipid metabolism; malonyl-CoA biosynthesis; malonyl-CoA from acetyl-CoA: step 1/1. Component of the acetyl coenzyme A carboxylase (ACC) complex. First, biotin carboxylase catalyzes the carboxylation of biotin on its carrier protein (BCCP) and then the CO(2) group is transferred by the carboxyltransferase to acetyl-CoA to form malonyl-CoA. The sequence is that of Acetyl-coenzyme A carboxylase carboxyl transferase subunit alpha from Salmonella dublin (strain CT_02021853).